Reading from the N-terminus, the 246-residue chain is Sugar fermentation stimulation protein homolog (246 aa).

The protein belongs to the SfsA family.

This chain is Sugar fermentation stimulation protein homolog, found in Prochlorococcus marinus (strain MIT 9215).